The sequence spans 390 residues: Putative 8-amino-7-oxononanoate synthase (390 aa).

Position 19 (Arg19) interacts with substrate. Position 105–106 (105–106 (GY)) interacts with pyridoxal 5'-phosphate. Residue His130 coordinates substrate. Residues Ser177, 202-205 (DEAH), and 234-237 (TFSK) each bind pyridoxal 5'-phosphate. Lys237 carries the N6-(pyridoxal phosphate)lysine modification. Thr351 is a substrate binding site.

The protein belongs to the class-II pyridoxal-phosphate-dependent aminotransferase family. BioF subfamily. Homodimer. The cofactor is pyridoxal 5'-phosphate.

It catalyses the reaction 6-carboxyhexanoyl-[ACP] + L-alanine + H(+) = (8S)-8-amino-7-oxononanoate + holo-[ACP] + CO2. It participates in cofactor biosynthesis; biotin biosynthesis. In terms of biological role, catalyzes the decarboxylative condensation of pimeloyl-[acyl-carrier protein] and L-alanine to produce 8-amino-7-oxononanoate (AON), [acyl-carrier protein], and carbon dioxide. The protein is Putative 8-amino-7-oxononanoate synthase (bioF) of Geobacillus kaustophilus (strain HTA426).